The primary structure comprises 196 residues: HTH-type transcriptional regulator BetI (196 aa).

The HTH tetR-type domain maps to Glu8–Leu68. Residues Thr31 to Phe50 constitute a DNA-binding region (H-T-H motif).

It participates in amine and polyamine biosynthesis; betaine biosynthesis via choline pathway [regulation]. In terms of biological role, repressor involved in the biosynthesis of the osmoprotectant glycine betaine. It represses transcription of the choline transporter BetT and the genes of BetAB involved in the synthesis of glycine betaine. The protein is HTH-type transcriptional regulator BetI of Paraburkholderia phymatum (strain DSM 17167 / CIP 108236 / LMG 21445 / STM815) (Burkholderia phymatum).